Here is a 250-residue protein sequence, read N- to C-terminus: ATP synthase subunit b 2 (250 aa).

The chain crosses the membrane as a helical span at residues 2–22 (LIDWFTVFAQILNFVILLGLL).

Belongs to the ATPase B chain family. F-type ATPases have 2 components, F(1) - the catalytic core - and F(0) - the membrane proton channel. F(1) has five subunits: alpha(3), beta(3), gamma(1), delta(1), epsilon(1). F(0) has four main subunits: a(1), b(1), b'(1) and c(10-14). The alpha and beta chains form an alternating ring which encloses part of the gamma chain. F(1) is attached to F(0) by a central stalk formed by the gamma and epsilon chains, while a peripheral stalk is formed by the delta, b and b' chains.

It localises to the cellular thylakoid membrane. F(1)F(0) ATP synthase produces ATP from ADP in the presence of a proton or sodium gradient. F-type ATPases consist of two structural domains, F(1) containing the extramembraneous catalytic core and F(0) containing the membrane proton channel, linked together by a central stalk and a peripheral stalk. During catalysis, ATP synthesis in the catalytic domain of F(1) is coupled via a rotary mechanism of the central stalk subunits to proton translocation. In terms of biological role, component of the F(0) channel, it forms part of the peripheral stalk, linking F(1) to F(0). In Picosynechococcus sp. (strain ATCC 27264 / PCC 7002 / PR-6) (Agmenellum quadruplicatum), this protein is ATP synthase subunit b 2.